The chain runs to 193 residues: Probable GTP-binding protein EngB (193 aa).

The 172-residue stretch at 22–193 (ALPEFALAGR…EAWAALERFL (172 aa)) folds into the EngB-type G domain. GTP-binding positions include 30 to 37 (GRSNVGKS), 57 to 61 (GKTQT), 75 to 78 (DVPG), 142 to 145 (TKAD), and 174 to 176 (FSA). Mg(2+) is bound by residues S37 and T59.

Belongs to the TRAFAC class TrmE-Era-EngA-EngB-Septin-like GTPase superfamily. EngB GTPase family. Mg(2+) is required as a cofactor.

Necessary for normal cell division and for the maintenance of normal septation. This chain is Probable GTP-binding protein EngB, found in Geobacillus sp. (strain WCH70).